Reading from the N-terminus, the 328-residue chain is ATP synthase mitochondrial F1 complex assembly factor 1 (328 aa).

A mitochondrion-targeting transit peptide spans 1-57 (MAAVVVAAAGGAGPAVLQVAGLYRGLCAVRSRALGLGLVSPAQLRVFPVRPGSGRPE).

This sequence belongs to the ATP11 family. Interacts with ATP5F1B; involved in the assembly of the F1 component of the mitochondrial ATP synthase (ATPase). In terms of tissue distribution, weakly expressed in muscle.

It is found in the mitochondrion inner membrane. Its function is as follows. Has a complex stabilizing activity in the assembly of the mitochondrial F1-F0 complex. In Homo sapiens (Human), this protein is ATP synthase mitochondrial F1 complex assembly factor 1.